Consider the following 485-residue polypeptide: Cysteine--tRNA ligase (485 aa).

Cysteine 28 is a binding site for Zn(2+). Positions 30–40 match the 'HIGH' region motif; sequence MTVYDLCHVGH. The Zn(2+) site is built by cysteine 209, histidine 234, and glutamate 238. The 'KMSKS' region signature appears at 266–270; it reads KMSKS. An ATP-binding site is contributed by lysine 269.

Belongs to the class-I aminoacyl-tRNA synthetase family. As to quaternary structure, monomer. It depends on Zn(2+) as a cofactor.

It is found in the cytoplasm. It carries out the reaction tRNA(Cys) + L-cysteine + ATP = L-cysteinyl-tRNA(Cys) + AMP + diphosphate. In Nitrosococcus oceani (strain ATCC 19707 / BCRC 17464 / JCM 30415 / NCIMB 11848 / C-107), this protein is Cysteine--tRNA ligase.